The following is a 42-amino-acid chain: Photosystem II reaction center protein J (42 aa).

Residues 10–30 (IPLWLVGTVAGTAALTLVAVF) form a helical membrane-spanning segment.

The protein belongs to the PsbJ family. PSII is composed of 1 copy each of membrane proteins PsbA, PsbB, PsbC, PsbD, PsbE, PsbF, PsbH, PsbI, PsbJ, PsbK, PsbL, PsbM, PsbT, PsbX, PsbY, PsbZ, Psb30/Ycf12, at least 3 peripheral proteins of the oxygen-evolving complex and a large number of cofactors. It forms dimeric complexes.

It localises to the plastid. Its subcellular location is the chloroplast thylakoid membrane. One of the components of the core complex of photosystem II (PSII). PSII is a light-driven water:plastoquinone oxidoreductase that uses light energy to abstract electrons from H(2)O, generating O(2) and a proton gradient subsequently used for ATP formation. It consists of a core antenna complex that captures photons, and an electron transfer chain that converts photonic excitation into a charge separation. In Chlorella vulgaris (Green alga), this protein is Photosystem II reaction center protein J.